We begin with the raw amino-acid sequence, 700 residues long: MARKTPIDKYRNIGISAHIDAGKTTTTERVLFYTGVNHKIGEVHDGAATMDWMEQEQERGITITSAATTTFWKGMAGNMPEHRINIIDTPGHVDFTIEVERSMRVLDGACMVYCAVGGVQPQSETVWRQANKYQVPRLAFVNKMDRTGANFFKVYEQMRTRLKANPILIQIPIGAEENFKGVVDLVKMKAVYWDEASQGTKFTYEDIPVELQASAEEWCEKMLEAAAESSEELMEKYLGGEGLTEEEIKKALRQRTIANEIVPMLCGTAFKNKGVQAMLDAVVELLPSPLDVPPVPCELEDGTPAVRKASDDEKFSALAFKIMTDPFVGQLIFFRVYSGVMKSGDTIYNPIKGKKERVGRLLQMHANEREEIKEVFAGDIAAAVGLKDATTGETLCDPDSIVVLERMVFPEPVISQAVEPKTKADQEKMGFALNRLAQEDPSFRVKTDEESGQTIISGMGELHLEILVDRMKREFGVEATVGKPQVAYRETIRKTCDEVEGKFVKQSGGRGQYGHVVLKLEPQAPGKGFEFVDAIKGGVVPREYIPAVEKGIIETLNSGVLAGYPVVDVKATLFFGSYHDVDSNENAFKMAGSMAFKDGMRKAAPVLLEPMMAVEVETPEDFMGNVMGDFSSRRGILQGMDDIPGGGKIVRAEVPLAEMFGYSTGLRSLTQGRATYTMEFKHYAEAPKNVAEAVMAAKAK.

In terms of domain architecture, tr-type G spans 8–290 (DKYRNIGISA…AVVELLPSPL (283 aa)). GTP-binding positions include 17-24 (AHIDAGKT), 88-92 (DTPGH), and 142-145 (NKMD).

It belongs to the TRAFAC class translation factor GTPase superfamily. Classic translation factor GTPase family. EF-G/EF-2 subfamily.

Its subcellular location is the cytoplasm. Functionally, catalyzes the GTP-dependent ribosomal translocation step during translation elongation. During this step, the ribosome changes from the pre-translocational (PRE) to the post-translocational (POST) state as the newly formed A-site-bound peptidyl-tRNA and P-site-bound deacylated tRNA move to the P and E sites, respectively. Catalyzes the coordinated movement of the two tRNA molecules, the mRNA and conformational changes in the ribosome. The polypeptide is Elongation factor G (Polynucleobacter necessarius subsp. necessarius (strain STIR1)).